Reading from the N-terminus, the 65-residue chain is Large ribosomal subunit protein bL35 (65 aa).

Positions 1–28 (MPKIKTNRGAAKRFRKTGSGKIRRNKAF) are disordered. A compositionally biased stretch (basic residues) spans 10-26 (AAKRFRKTGSGKIRRNK).

It belongs to the bacterial ribosomal protein bL35 family.

In Syntrophotalea carbinolica (strain DSM 2380 / NBRC 103641 / GraBd1) (Pelobacter carbinolicus), this protein is Large ribosomal subunit protein bL35.